Consider the following 720-residue polypeptide: Phosphoribosylformylglycinamidine synthase subunit PurL (720 aa).

Histidine 47 is a catalytic residue. Residues tyrosine 50 and lysine 89 each contribute to the ATP site. Position 91 (glutamate 91) interacts with Mg(2+). Substrate-binding positions include 92 to 95 (SHNH) and arginine 114. The active-site Proton acceptor is histidine 93. A Mg(2+)-binding site is contributed by aspartate 115. Glutamine 238 serves as a coordination point for substrate. Position 266 (aspartate 266) interacts with Mg(2+). 310 to 312 (ESQ) is a substrate binding site. ATP is bound by residues aspartate 488 and glycine 525. Residue asparagine 526 coordinates Mg(2+). Residue serine 528 coordinates substrate.

This sequence belongs to the FGAMS family. In terms of assembly, monomer. Part of the FGAM synthase complex composed of 1 PurL, 1 PurQ and 2 PurS subunits.

It is found in the cytoplasm. The enzyme catalyses N(2)-formyl-N(1)-(5-phospho-beta-D-ribosyl)glycinamide + L-glutamine + ATP + H2O = 2-formamido-N(1)-(5-O-phospho-beta-D-ribosyl)acetamidine + L-glutamate + ADP + phosphate + H(+). Its pathway is purine metabolism; IMP biosynthesis via de novo pathway; 5-amino-1-(5-phospho-D-ribosyl)imidazole from N(2)-formyl-N(1)-(5-phospho-D-ribosyl)glycinamide: step 1/2. Its function is as follows. Part of the phosphoribosylformylglycinamidine synthase complex involved in the purines biosynthetic pathway. Catalyzes the ATP-dependent conversion of formylglycinamide ribonucleotide (FGAR) and glutamine to yield formylglycinamidine ribonucleotide (FGAM) and glutamate. The FGAM synthase complex is composed of three subunits. PurQ produces an ammonia molecule by converting glutamine to glutamate. PurL transfers the ammonia molecule to FGAR to form FGAM in an ATP-dependent manner. PurS interacts with PurQ and PurL and is thought to assist in the transfer of the ammonia molecule from PurQ to PurL. The chain is Phosphoribosylformylglycinamidine synthase subunit PurL from Cereibacter sphaeroides (strain ATCC 17023 / DSM 158 / JCM 6121 / CCUG 31486 / LMG 2827 / NBRC 12203 / NCIMB 8253 / ATH 2.4.1.) (Rhodobacter sphaeroides).